A 1129-amino-acid chain; its full sequence is PAN2-PAN3 deadenylation complex catalytic subunit PAN2 (1129 aa).

5 WD repeats span residues 20-60, 104-146, 148-183, 186-226, and 280-319; these read PPAV…YTSY, PDFK…DTLP, DAQY…VIKV, GHTG…FSLK, and LYDS…HFPE. Residues 320 to 457 form a linker region; sequence YSNPTEFADH…DLHLDDVTRK (138 aa). The segment at 396-427 is disordered; sequence RTKRRNQIEVTRQTDRSSDSLTPPKFLSEKSR. The region spanning 458-830 is the USP domain; the sequence is DVPAMYGNVE…LPSVLTFQTK (373 aa). The 173-residue stretch at 880 to 1052 folds into the Exonuclease domain; that stretch reads VAIDAEFIRL…IEDATTALKL (173 aa). Residues D883, E885, D992, and D1045 each coordinate a divalent metal cation. The tract at residues 1083–1129 is disordered; that stretch reads APGSGNRNSMPAGMTATGAGRDTPEPMTTPKKGGAFGGVGFRSPMRR.

It belongs to the peptidase C19 family. PAN2 subfamily. In terms of assembly, forms a heterotrimer with an asymmetric homodimer of the regulatory subunit PAN3 to form the poly(A)-nuclease (PAN) deadenylation complex. A divalent metal cation is required as a cofactor.

It is found in the cytoplasm. It carries out the reaction Exonucleolytic cleavage of poly(A) to 5'-AMP.. Its activity is regulated as follows. Positively regulated by the regulatory subunit PAN3. Catalytic subunit of the poly(A)-nuclease (PAN) deadenylation complex, one of two cytoplasmic mRNA deadenylases involved in mRNA turnover. PAN specifically shortens poly(A) tails of RNA and the activity is stimulated by poly(A)-binding protein PAB1. PAN deadenylation is followed by rapid degradation of the shortened mRNA tails by the CCR4-NOT complex. Deadenylated mRNAs are then degraded by two alternative mechanisms, namely exosome-mediated 3'-5' exonucleolytic degradation, or deadenylation-dependent mRNA decaping and subsequent 5'-3' exonucleolytic degradation by XRN1. May also be involved in post-transcriptional maturation of mRNA poly(A) tails. The sequence is that of PAN2-PAN3 deadenylation complex catalytic subunit PAN2 from Phaeosphaeria nodorum (strain SN15 / ATCC MYA-4574 / FGSC 10173) (Glume blotch fungus).